Here is a 997-residue protein sequence, read N- to C-terminus: Translation initiation factor IF-2 (997 aa).

The tract at residues 101 to 406 (ELAAEQAAAR…SRNQHQDRRH (306 aa)) is disordered. Composition is skewed to low complexity over residues 116 to 185 (AEAV…QAEP) and 195 to 209 (AAPA…EPAK). Residues 231-242 (TELTSQTPTPVA) show a composition bias toward polar residues. Over residues 256-280 (AEPAAAPKTTAKPGEIRRAAAPAAP) the composition is skewed to low complexity. Residues 281-292 (DRAREEARRAAE) show a composition bias toward basic and acidic residues. Over residues 385–394 (RAGGKGGRGG) the composition is skewed to gly residues. One can recognise a tr-type G domain in the interval 498–665 (PRAPVVTVMG…NVLLQAEILE (168 aa)). A G1 region spans residues 507 to 514 (GHVDHGKT). Residue 507–514 (GHVDHGKT) participates in GTP binding. A G2 region spans residues 532-536 (GITQH). Positions 553–556 (DTPG) are G3. GTP contacts are provided by residues 553-557 (DTPGH) and 607-610 (NKID). The interval 607-610 (NKID) is G4. Residues 643–645 (SAK) form a G5 region.

The protein belongs to the TRAFAC class translation factor GTPase superfamily. Classic translation factor GTPase family. IF-2 subfamily.

The protein localises to the cytoplasm. Functionally, one of the essential components for the initiation of protein synthesis. Protects formylmethionyl-tRNA from spontaneous hydrolysis and promotes its binding to the 30S ribosomal subunits. Also involved in the hydrolysis of GTP during the formation of the 70S ribosomal complex. The chain is Translation initiation factor IF-2 from Bordetella pertussis (strain Tohama I / ATCC BAA-589 / NCTC 13251).